The following is a 380-amino-acid chain: Cytochrome b (380 aa).

The next 4 membrane-spanning stretches (helical) occupy residues 33 to 53, 77 to 98, 113 to 133, and 178 to 198; these read FGSL…FLAM, WLIR…YLHV, WNIG…GYVL, and FFAF…IHLL. Heme b contacts are provided by His83 and His97. His182 and His196 together coordinate heme b. His201 lines the a ubiquinone pocket. 4 helical membrane passes run 226-246, 288-308, 320-340, and 347-367; these read YKDM…TLFT, LGGV…PILH, ITQM…WIGG, and FMTI…ILIP.

It belongs to the cytochrome b family. The cytochrome bc1 complex contains 3 respiratory subunits (MT-CYB, CYC1 and UQCRFS1), 2 core proteins (UQCRC1 and UQCRC2) and probably 6 low-molecular weight proteins. Requires heme b as cofactor.

It is found in the mitochondrion inner membrane. Component of the ubiquinol-cytochrome c reductase complex (complex III or cytochrome b-c1 complex) that is part of the mitochondrial respiratory chain. The b-c1 complex mediates electron transfer from ubiquinol to cytochrome c. Contributes to the generation of a proton gradient across the mitochondrial membrane that is then used for ATP synthesis. In Latimeria chalumnae (Coelacanth), this protein is Cytochrome b (mt-cyb).